The primary structure comprises 847 residues: MKEVAKEIIKIDIEDELKNSYLDYAMSVIIGRALPDVRDGLKPVHRRILFAMKVLNNDWNKTYKKSARIVGDVIGKYHPHGDTAVYDAIVRMAQPFSLRYVLIDGQGNFGSIDGDSAAAMRYTEIRMSKIAYELLNDLDKNTVSFFSNYDGTEKIPEVLPAKIPNLLINGSSGIAVGMATNIPPHNIKEVINGCLAFIDDQNITLKKLMEHIPGPDFPTAGLINGKRGIEKAYKTGKGKIYIRAKSIIEIQKKTKKKSIIIYELPYQVNKARVIKGIANLVKEKKIEGITTLRDESDKEGMRIVIEIKKETKAEIILNQLYSLTQLEISFGINMVALIHGQPKVMTLKEILNAFINHRRKIIMRRSLFELNKIRKKIHILEGLIISLDNIDLIINLIKKSSTLEEAKNKLKTYHWYSKHAQYTQILKKNAHSLTPYDKKLRPIDTQKFFLTPEQIQAILELRLQKLTHLEHKKLISEYKQLFKTSNNLENILKNNNILTKIMKDELIKIRDNFGDKRRTKINVNYSDINTSDLINKENVVITLSYSGYVKYQLLSSYEAQKRGGKGKLAVKTKEEDFIENLLVANTHDIILCFSSKGILYWMKVYQLPEASRHARGRPIVNLLPLSSNERITAILPISEYKDSINIFMATSKGMVKKTSLYEFKKPRTKGIIAINLKADDELIGVSLTNGNNTIMLFTAQGKAVHFSEILVRKTGRTAIGVQGIKIKKSDKVVSLVVPKKHGNILLITEHGYGKRTEIHEFPIKSRATQGTIAMKITKKNGIVIGTMQVVNQDQIIIITNAGTLVRTRVLEIGILGRNTQGVIIIRTSKKEKVVALQKANALHLNSV.

The Topo IIA-type catalytic domain occupies 34-533; sequence LPDVRDGLKP…NYSDINTSDL (500 aa). Tyr122 acts as the O-(5'-phospho-DNA)-tyrosine intermediate in catalysis. Residues 560 to 566 carry the GyrA-box motif; that stretch reads QKRGGKG.

Belongs to the type II topoisomerase GyrA/ParC subunit family. As to quaternary structure, heterotetramer, composed of two GyrA and two GyrB chains. In the heterotetramer, GyrA contains the active site tyrosine that forms a transient covalent intermediate with DNA, while GyrB binds cofactors and catalyzes ATP hydrolysis.

It localises to the cytoplasm. It catalyses the reaction ATP-dependent breakage, passage and rejoining of double-stranded DNA.. Functionally, a type II topoisomerase that negatively supercoils closed circular double-stranded (ds) DNA in an ATP-dependent manner to modulate DNA topology and maintain chromosomes in an underwound state. Negative supercoiling favors strand separation, and DNA replication, transcription, recombination and repair, all of which involve strand separation. Also able to catalyze the interconversion of other topological isomers of dsDNA rings, including catenanes and knotted rings. Type II topoisomerases break and join 2 DNA strands simultaneously in an ATP-dependent manner. The protein is DNA gyrase subunit A of Buchnera aphidicola subsp. Baizongia pistaciae (strain Bp).